Consider the following 427-residue polypeptide: MVETFSFAHLAYLVFESVLQVVIIALAGFWSASSGLLPKQSQKIISLLNVDLFTPCLIFSKLAKSLSMAKIFEIAIIPIFFGLTTGISFISGKIMSRILDLDKDETNFVVANSVFGNSNSLPVSLTLSLAYTLPNLTWDQIPNDNRDNVASRGILYLLIFQQIGQMLRWSWGYNKLMKWSGENTQHMPPSQVQSLLERTPNIDNEELVNEEQEEQELLEEENNRMNSSFLSSSSIGDKIWQKSCTVFERIRANLNPPLYSMIFAVVVAAIGPLQRELFMEDGFINNTFAEAVTQLGSVSIPLILVVLGSNLYPSAEVFPKTVHHSKLLIGSIIGRMILPSCFLLPIIAIAVKYINVSILDDPIFLVVGFLLTVSPPAIQLTQITQLNEFFEAEMADILFWGYAVLSLPVSIIVVSGAIYVLQWANPT.

3 helical membrane passes run 10–30 (LAYLVFESVLQVVIIALAGFW), 43–63 (KIISLLNVDLFTPCLIFSKLA), and 71–91 (IFEIAIIPIFFGLTTGISFIS). Thr199 carries the post-translational modification Phosphothreonine. Position 234 is a phosphoserine (Ser234). A run of 5 helical transmembrane segments spans residues 253 to 273 (NLNPPLYSMIFAVVVAAIGPL), 288 to 308 (FAEAVTQLGSVSIPLILVVLG), 327 to 347 (LLIGSIIGRMILPSCFLLPII), 358 to 378 (ILDDPIFLVVGFLLTVSPPAI), and 397 to 417 (ILFWGYAVLSLPVSIIVVSGA).

The protein belongs to the auxin efflux carrier (TC 2.A.69) family.

The protein localises to the membrane. This is an uncharacterized protein from Saccharomyces cerevisiae (strain ATCC 204508 / S288c) (Baker's yeast).